The primary structure comprises 555 residues: Zinc transporter ZIP5 (555 aa).

Over 1–242 (MGGQTVWMTL…HSQASKTSEG (242 aa)) the chain is Extracellular. A disordered region spans residues 108 to 148 (KHPSQSISHSHSHEDHHPSQGTTNSPPLRESLDAKSALSGS). Residues 243-263 (FLIALGWASLALLVISLPSLV) form a helical membrane-spanning segment. Topologically, residues 264–314 (ALGMAPLLQPSVLQVFLCPMAGMAVGTLCGDALLHLMPHAIFSQHTDHQNA) are cytoplasmic. A helical transmembrane segment spans residues 315–335 (VFKGLSVLGGLYLLFIFESLL). Residues 336–408 (GLKQHFKNLK…DGIHNLTDGL (73 aa)) are Extracellular-facing. Residues 363–374 (TSSANQNESSGH) show a composition bias toward polar residues. Positions 363–383 (TSSANQNESSGHGHSHGQAEP) are disordered. A helical transmembrane segment spans residues 409–429 (AIGVAFSQSLTGGFSTAIAVF). Over 430–452 (CHELPHELGDLAVLLSAGWPVRR) the chain is Cytoplasmic. A helical transmembrane segment spans residues 453 to 473 (LLVFSGLSALLGFVGVLAGSA). At 474 to 482 (LGNHWASHS) the chain is on the extracellular side. The chain crosses the membrane as a helical span at residues 483-503 (PWILTLTAGVFLYVALADMMP). The Cytoplasmic portion of the chain corresponds to 504–518 (EMLHGACGSVSPLKR). Residues 519–539 (FLLQALGLLTGGAIMLCIALF) traverse the membrane as a helical segment. Residues 540–555 (EDHIAVSLGENSLGEN) are Extracellular-facing.

The protein belongs to the ZIP transporter (TC 2.A.5) family.

It is found in the basolateral cell membrane. It carries out the reaction Zn(2+)(in) = Zn(2+)(out). Uniporter that transports zinc(2+) into polarized cells of enterocytes, pancreatic acinar and endoderm cells across the basolateral membrane and participates, notably, in zinc excretion from the intestine by the uptake of zinc from the blood into the intestine. The transport mechanism is temperature- and concentration-dependent and saturable. Mediates zinc homeostasis that is essential for venous angiogenesis. This is Zinc transporter ZIP5 (slc39a5) from Danio rerio (Zebrafish).